Here is a 429-residue protein sequence, read N- to C-terminus: Glutamate-1-semialdehyde 2,1-aminomutase 2 (429 aa).

Lys-268 is modified (N6-(pyridoxal phosphate)lysine).

The protein belongs to the class-III pyridoxal-phosphate-dependent aminotransferase family. HemL subfamily. As to quaternary structure, homodimer. The cofactor is pyridoxal 5'-phosphate.

It localises to the cytoplasm. The catalysed reaction is (S)-4-amino-5-oxopentanoate = 5-aminolevulinate. It participates in porphyrin-containing compound metabolism; protoporphyrin-IX biosynthesis; 5-aminolevulinate from L-glutamyl-tRNA(Glu): step 2/2. This is Glutamate-1-semialdehyde 2,1-aminomutase 2 from Bacillus thuringiensis (strain Al Hakam).